The sequence spans 335 residues: NADH-quinone oxidoreductase subunit H (335 aa).

A run of 8 helical transmembrane segments spans residues 12-32 (IIAVVKAIVVLLAVVVCGALL), 81-101 (VIFTLAPVVAMSALLIAFAVI), 114-134 (IGLLFFFAMAGLSVYAVLFAG), 154-174 (VSYEVFMGLALMGIVVQVGSF), 187-207 (LWFIIPQFFGFCTFFIAGVAV), 238-258 (FFVGEYIGIILISALLVTLFF), 270-290 (SLAFFWFALKTAFFIMLFILL), and 307-327 (WKFCLPLTLINLLVTAAIVLL).

It belongs to the complex I subunit 1 family. As to quaternary structure, NDH-1 is composed of 13 different subunits. Subunits NuoA, H, J, K, L, M, N constitute the membrane sector of the complex.

It is found in the cell inner membrane. It carries out the reaction a quinone + NADH + 5 H(+)(in) = a quinol + NAD(+) + 4 H(+)(out). In terms of biological role, NDH-1 shuttles electrons from NADH, via FMN and iron-sulfur (Fe-S) centers, to quinones in the respiratory chain. The immediate electron acceptor for the enzyme in this species is believed to be ubiquinone. Couples the redox reaction to proton translocation (for every two electrons transferred, four hydrogen ions are translocated across the cytoplasmic membrane), and thus conserves the redox energy in a proton gradient. This subunit may bind ubiquinone. The sequence is that of NADH-quinone oxidoreductase subunit H from Pseudomonas syringae pv. tomato (strain ATCC BAA-871 / DC3000).